Here is a 405-residue protein sequence, read N- to C-terminus: Transcriptional regulatory protein DEP1 (405 aa).

Residues 1–12 (MSQQTPQESEQT) are compositionally biased toward low complexity. Disordered stretches follow at residues 1–26 (MSQQ…SVLS) and 49–171 (AGTE…VMPS). Position 56 is a phosphoserine (S56). 2 stretches are compositionally biased toward basic and acidic residues: residues 86 to 108 (SLKR…KVPG) and 116 to 139 (EEEK…ARDE). At S120 the chain carries Phosphoserine. Over residues 140-157 (QGDEGDNEEENNEEDNEN) the composition is skewed to acidic residues. S370 is subject to Phosphoserine.

Component of the RPD3C(L) complex composed of at least ASH1, CTI6, DEP1, PHO23, RPD3, RXT2, RXT3, SAP30, SDS3, SIN3, UME1 and UME6.

Its subcellular location is the cytoplasm. It localises to the nucleus. In terms of biological role, component of the RPD3C(L) histone deacetylase complex (HDAC) responsible for the deacetylation of lysine residues on the N-terminal part of the core histones (H2A, H2B, H3 and H4). Histone deacetylation gives a tag for epigenetic repression and plays an important role in transcriptional regulation, cell cycle progression and developmental events. The chain is Transcriptional regulatory protein DEP1 (DEP1) from Saccharomyces cerevisiae (strain ATCC 204508 / S288c) (Baker's yeast).